Reading from the N-terminus, the 474-residue chain is UDP-N-acetylmuramate--L-alanine ligase (474 aa).

122–128 (GTHGKTT) is an ATP binding site.

This sequence belongs to the MurCDEF family.

It localises to the cytoplasm. It catalyses the reaction UDP-N-acetyl-alpha-D-muramate + L-alanine + ATP = UDP-N-acetyl-alpha-D-muramoyl-L-alanine + ADP + phosphate + H(+). The protein operates within cell wall biogenesis; peptidoglycan biosynthesis. In terms of biological role, cell wall formation. In Saccharophagus degradans (strain 2-40 / ATCC 43961 / DSM 17024), this protein is UDP-N-acetylmuramate--L-alanine ligase.